Reading from the N-terminus, the 204-residue chain is Holliday junction branch migration complex subunit RuvA (204 aa).

Positions 1 to 64 (MIGKLKGTLE…EEAIRLFGFA (64 aa)) are domain I. A domain II region spans residues 65-143 (TRAEQEWFCM…PFEQAVKTVS (79 aa)). Residues 144 to 154 (VPQREITHQPA) are flexible linker. The interval 154 to 204 (AHDALSALMKLGFEREQAARALALAMNALEGEAVSSALLIRHSLKLLSSPT) is domain III.

It belongs to the RuvA family. As to quaternary structure, homotetramer. Forms an RuvA(8)-RuvB(12)-Holliday junction (HJ) complex. HJ DNA is sandwiched between 2 RuvA tetramers; dsDNA enters through RuvA and exits via RuvB. An RuvB hexamer assembles on each DNA strand where it exits the tetramer. Each RuvB hexamer is contacted by two RuvA subunits (via domain III) on 2 adjacent RuvB subunits; this complex drives branch migration. In the full resolvosome a probable DNA-RuvA(4)-RuvB(12)-RuvC(2) complex forms which resolves the HJ.

The protein resides in the cytoplasm. The RuvA-RuvB-RuvC complex processes Holliday junction (HJ) DNA during genetic recombination and DNA repair, while the RuvA-RuvB complex plays an important role in the rescue of blocked DNA replication forks via replication fork reversal (RFR). RuvA specifically binds to HJ cruciform DNA, conferring on it an open structure. The RuvB hexamer acts as an ATP-dependent pump, pulling dsDNA into and through the RuvAB complex. HJ branch migration allows RuvC to scan DNA until it finds its consensus sequence, where it cleaves and resolves the cruciform DNA. This Bartonella tribocorum (strain CIP 105476 / IBS 506) protein is Holliday junction branch migration complex subunit RuvA.